Consider the following 495-residue polypeptide: MPQLLQNINGIIEAFRRYARTEGNCTALTRGELKRLLEQEFADVIVKPHDPATVDEVLRLLDEDHTGTVEFKEFLVLVFKVAQACFKTLSESAEGACGSQESGSLHSGASQELGEGQRSGTEVGRAGKGQHYEGSSHRQSQQGSRGQNRPGVQTQGQATGSAWVSSYDRQAESQSQERISPQIQLSGQTEQTQKAGEGKRNQTTEMRPERQPQTREQDRAHQTGETVTGSGTQTQAGATQTVEQDSSHQTGRTSKQTQEATNDQNRGTETHGQGRSQTSQAVTGGHAQIQAGTHTQTPTQTVEQDSSHQTGSTSTQTQESTNGQNRGTEIHGQGRSQTSQAVTGGHTQIQAGSHTETVEQDRSQTVSHGGAREQGQTQTQPGSGQRWMQVSNPEAGETVPGGQAQTGASTESGRQEWSSTHPRRCVTEGQGDRQPTVVGEEWVDDHSRETVILRLDQGNLHTSVSSAQGQDAAQSEEKRGITARELYSYLRSTKP.

In terms of domain architecture, EF-hand spans 49–84 (HDPATVDEVLRLLDEDHTGTVEFKEFLVLVFKVAQA). The Ca(2+) site is built by Asp-62, Asp-64, Thr-66, Thr-68, and Glu-73. Disordered stretches follow at residues 96–439 (ACGS…TVVG) and 460–481 (LHTSVSSAQGQDAAQSEEKRGI). The span at 99–110 (SQESGSLHSGAS) shows a compositional bias: polar residues. Residues 137–151 (HRQSQQGSRGQNRPG) show a composition bias toward low complexity. Over residues 152-194 (VQTQGQATGSAWVSSYDRQAESQSQERISPQIQLSGQTEQTQK) the composition is skewed to polar residues. A compositionally biased stretch (basic and acidic residues) spans 196–222 (GEGKRNQTTEMRPERQPQTREQDRAHQ). Residues 226-242 (TVTGSGTQTQAGATQTV) are compositionally biased toward low complexity. Composition is skewed to polar residues over residues 243–282 (EQDSSHQTGRTSKQTQEATNDQNRGTETHGQGRSQTSQAV) and 290–303 (QAGTHTQTPTQTVE). A compositionally biased stretch (low complexity) spans 307-324 (SHQTGSTSTQTQESTNGQ). A compositionally biased stretch (polar residues) spans 334–355 (GRSQTSQAVTGGHTQIQAGSHT). Residues 374–385 (QGQTQTQPGSGQ) show a composition bias toward low complexity. 2 stretches are compositionally biased toward polar residues: residues 403 to 420 (QAQTGASTESGRQEWSST) and 460 to 473 (LHTSVSSAQGQDAA).

This sequence belongs to the S100-fused protein family. In terms of assembly, homodimer. As to expression, expressed in the basal skin layer (at protein level). Squamous epithelia cell-specific. Expressed in the esophagus (periphery of the cells of the granular and the upper spinous layers), foreskin (granular and lower cornified cells), scalp skin (granular layer), inner root sheath of the hair follicle and in primary keratinocytes (at protein level). Expressed in the squamous epithelium of the cervix, esophagus, foreskin and larynx. Expressed in the fetal bladder and scalp skin. Expressed at very low levels in the lung, kidney, uterus, skeletal muscle, heart and fetal brain. Undetectable or barely detectable in esophageal and oral squamous cell carcinoma compared with the matched adjacent normal esophageal mucosa. Undetectable or barely detectable in larynx and esophagus from patients with pH-documented laryngopharyngeal reflux (LPR).

It is found in the cytoplasm. Its function is as follows. Promotes cell proliferation, G1/S cell cycle progression and induces expression of the cell cycle regulator CCND1. Regulates proliferation induced by pro-inflammatory cytokine response via activation of NFKB1 and PI3K/AKT signaling pathways. This Homo sapiens (Human) protein is Cornulin (CRNN).